The primary structure comprises 160 residues: Ribosome maturation factor RimP (160 aa).

The protein belongs to the RimP family.

The protein resides in the cytoplasm. Functionally, required for maturation of 30S ribosomal subunits. The sequence is that of Ribosome maturation factor RimP from Syntrophus aciditrophicus (strain SB).